Here is a 122-residue protein sequence, read N- to C-terminus: Large ribosomal subunit protein uL14 (122 aa).

The protein belongs to the universal ribosomal protein uL14 family. Part of the 50S ribosomal subunit. Forms a cluster with proteins L3 and L19. In the 70S ribosome, L14 and L19 interact and together make contacts with the 16S rRNA in bridges B5 and B8.

Functionally, binds to 23S rRNA. Forms part of two intersubunit bridges in the 70S ribosome. The sequence is that of Large ribosomal subunit protein uL14 from Mycobacterium tuberculosis (strain ATCC 25177 / H37Ra).